The following is a 389-amino-acid chain: Flap endonuclease 1 (389 aa).

The interval 1-105 is N-domain; it reads MGIKGLTALM…GELAKRKDKR (105 aa). Mg(2+) is bound at residue Asp34. Position 71 (Arg71) interacts with DNA. Mg(2+)-binding residues include Asp87, Glu159, Glu161, Asp180, and Asp182. The tract at residues 123–254 is I-domain; it reads EVEKLSKRTV…KTALKLIKEH (132 aa). Glu159 serves as a coordination point for DNA. Residues Gly232 and Asp234 each contribute to the DNA site. Asp234 is a Mg(2+) binding site. The segment at 338–346 is interaction with PCNA; that stretch reads SQNRLESFF. The interval 356–389 is disordered; it reads IGKRKVEEKKGKNGKAGLANKKSKGVSGFRRSKN.

The protein belongs to the XPG/RAD2 endonuclease family. FEN1 subfamily. In terms of assembly, interacts with PCNA. Three molecules of FEN1 bind to one PCNA trimer with each molecule binding to one PCNA monomer. PCNA stimulates the nuclease activity without altering cleavage specificity. It depends on Mg(2+) as a cofactor. In terms of processing, phosphorylated. Phosphorylation upon DNA damage induces relocalization to the nuclear plasma.

It is found in the nucleus. It localises to the nucleolus. The protein localises to the nucleoplasm. Its subcellular location is the mitochondrion. In terms of biological role, structure-specific nuclease with 5'-flap endonuclease and 5'-3' exonuclease activities involved in DNA replication and repair. During DNA replication, cleaves the 5'-overhanging flap structure that is generated by displacement synthesis when DNA polymerase encounters the 5'-end of a downstream Okazaki fragment. It enters the flap from the 5'-end and then tracks to cleave the flap base, leaving a nick for ligation. Also involved in the long patch base excision repair (LP-BER) pathway, by cleaving within the apurinic/apyrimidinic (AP) site-terminated flap. Acts as a genome stabilization factor that prevents flaps from equilibrating into structures that lead to duplications and deletions. Also possesses 5'-3' exonuclease activity on nicked or gapped double-stranded DNA, and exhibits RNase H activity. Also involved in replication and repair of rDNA and in repairing mitochondrial DNA. The sequence is that of Flap endonuclease 1 from Ostreococcus lucimarinus (strain CCE9901).